Consider the following 323-residue polypeptide: Sphingolipid delta(4)-desaturase DES1 (323 aa).

The N-myristoyl glycine moiety is linked to residue glycine 2. A run of 2 helical transmembrane segments spans residues 41–61 (PNLI…FYLV) and 68–88 (WLMF…TLAI). The Histidine box-1 signature appears at 89 to 93 (HEISH). Residues 104-124 (WNRWFGMFANLSLGVPYSISF) form a helical membrane-spanning segment. The Histidine box-2 signature appears at 128–132 (HMDHH). The next 3 helical transmembrane spans lie at 152-172 (FFCT…FYAF), 184-204 (HLEV…YYVF), and 210-230 (VYML…GHFI). A Histidine box-3 motif is present at residues 259 to 263 (HNEHH). A Phosphoserine modification is found at serine 307.

Belongs to the fatty acid desaturase type 1 family. DEGS subfamily. As to quaternary structure, interacts with RLBP1; the interaction increases synthesis of chromophore-precursors by DEGS1. In terms of processing, myristoylation can target the enzyme to the mitochondria leading to an increase in ceramide levels.

It is found in the mitochondrion membrane. The protein localises to the endoplasmic reticulum membrane. It catalyses the reaction an N-acylsphinganine + 2 Fe(II)-[cytochrome b5] + O2 + 2 H(+) = an N-acylsphing-4-enine + 2 Fe(III)-[cytochrome b5] + 2 H2O. The enzyme catalyses all-trans-retinol = 11-cis-retinol. It carries out the reaction all-trans-retinol = 9-cis-retinol. The catalysed reaction is all-trans-retinol = 13-cis-retinol. It catalyses the reaction 11-cis-retinol = 13-cis-retinol. The enzyme catalyses 11-cis-retinol = 9-cis-retinol. Its function is as follows. Has sphingolipid-delta-4-desaturase activity. Converts D-erythro-sphinganine to D-erythro-sphingosine (E-sphing-4-enine). Catalyzes the equilibrium isomerization of retinols. This chain is Sphingolipid delta(4)-desaturase DES1, found in Rattus norvegicus (Rat).